We begin with the raw amino-acid sequence, 336 residues long: CASP-like protein UU1 (336 aa).

The Cytoplasmic portion of the chain corresponds to 1–170 (MGKGPGLDPS…PAMESNKDDN (170 aa)). Residues 171-191 (FFGAIVLSLRAAQIVFTVVGL) form a helical membrane-spanning segment. Residues 192–222 (GVMGSLKHTSHGDYYYYYYDFSFTQVDSYIG) lie on the Extracellular side of the membrane. Residues 223 to 243 (VLSLDVIVCLYAIVQLVLCFI) traverse the membrane as a helical segment. The Cytoplasmic segment spans residues 244–261 (QRSNQGKYLSSPTTVAAK). The chain crosses the membrane as a helical span at residues 262–282 (LTFVFDQVLAYALVATAGAAA). At 283-307 (GSALEIRKGTSCSGTWTVICSKGEA) the chain is on the extracellular side. A helical membrane pass occupies residues 308 to 328 (SVAMSFFAFAFLAATAAVYSV). The Cytoplasmic segment spans residues 329 to 336 (RLLRITGR).

The protein belongs to the Casparian strip membrane proteins (CASP) family. As to quaternary structure, homodimer and heterodimers.

It localises to the cell membrane. The sequence is that of CASP-like protein UU1 from Physcomitrium patens (Spreading-leaved earth moss).